The following is a 986-amino-acid chain: Bifunctional glutamine synthetase adenylyltransferase/adenylyl-removing enzyme (986 aa).

Positions 1–482 (MVTTVISNVK…RYGRLFAGEE (482 aa)) are adenylyl removase. Positions 486 to 986 (SRFGSLVFTG…RAAYEAVVKG (501 aa)) are adenylyl transferase.

It belongs to the GlnE family. Requires Mg(2+) as cofactor.

The enzyme catalyses [glutamine synthetase]-O(4)-(5'-adenylyl)-L-tyrosine + phosphate = [glutamine synthetase]-L-tyrosine + ADP. It carries out the reaction [glutamine synthetase]-L-tyrosine + ATP = [glutamine synthetase]-O(4)-(5'-adenylyl)-L-tyrosine + diphosphate. Its function is as follows. Involved in the regulation of glutamine synthetase GlnA, a key enzyme in the process to assimilate ammonia. When cellular nitrogen levels are high, the C-terminal adenylyl transferase (AT) inactivates GlnA by covalent transfer of an adenylyl group from ATP to specific tyrosine residue of GlnA, thus reducing its activity. Conversely, when nitrogen levels are low, the N-terminal adenylyl removase (AR) activates GlnA by removing the adenylyl group by phosphorolysis, increasing its activity. The regulatory region of GlnE binds the signal transduction protein PII (GlnB) which indicates the nitrogen status of the cell. This is Bifunctional glutamine synthetase adenylyltransferase/adenylyl-removing enzyme from Caulobacter vibrioides (strain ATCC 19089 / CIP 103742 / CB 15) (Caulobacter crescentus).